The chain runs to 424 residues: MAAAAFDTTENFAIEMDARDPMSRFRGRFHIPPAPDGSASVYLVGHSLGLQPKTVRAYLEQELKDWETLGVEGHFRGKHPWMPYHRLLTEQTARLVCAQPSEVVVMNSLTVNLHLMMVSFYRPTRERHNILIEGSAFPSDQYAVQSQIKFHGFDPASSLLELCPRVGEATMRDEDILELIEREGQSIALILLGGVNYATGQAFDMAEITKAGHAQGCVVAFDCAHAAGNLELKLHEWDVDWAAWCSYKYLNGGPGCIGGCFVHERYARDFELPRFAGWWGHDQETRFKMGPEFHPMAGAEGWQLSNPSILTMAALRASMEIFDEAGIGKLRQRSIALTGYLEFLLDQQKSARFEIITPREPERRGAQLSIRVAAGNRSVCDRLVEEGALCDWREPDILRVAPVPLYCSYRDCYRFVQRFVANLN.

Pyridoxal 5'-phosphate contacts are provided by residues Leu109, Thr110, 137–140 (FPSD), Asp222, His225, and Tyr247. Lys248 carries the N6-(pyridoxal phosphate)lysine modification. 2 residues coordinate pyridoxal 5'-phosphate: Trp278 and Asn306.

It belongs to the kynureninase family. Homodimer. It depends on pyridoxal 5'-phosphate as a cofactor.

It catalyses the reaction L-kynurenine + H2O = anthranilate + L-alanine + H(+). The catalysed reaction is 3-hydroxy-L-kynurenine + H2O = 3-hydroxyanthranilate + L-alanine + H(+). It participates in amino-acid degradation; L-kynurenine degradation; L-alanine and anthranilate from L-kynurenine: step 1/1. The protein operates within cofactor biosynthesis; NAD(+) biosynthesis; quinolinate from L-kynurenine: step 2/3. Functionally, catalyzes the cleavage of L-kynurenine (L-Kyn) and L-3-hydroxykynurenine (L-3OHKyn) into anthranilic acid (AA) and 3-hydroxyanthranilic acid (3-OHAA), respectively. This Koribacter versatilis (strain Ellin345) protein is Kynureninase.